The following is a 1061-amino-acid chain: DNA primase TraC (1061 aa).

Residues 850–938 (PALVIGEGYA…GKAIFPIFAP (89 aa)) form the Toprim domain. Residues 1034–1061 (EGQRQKVQQLKQQDIEQQEQRQRRARTY) form a disordered region.

Required for autonomous replication in E.coli. Transferred into the recipient cell during bacterial conjugation. Catalyzes the synthesis of short oligoribonucleotide primers with CpA or pCpA at their 5'-termini on a single-stranded template DNA. This Escherichia coli protein is DNA primase TraC (traC).